The primary structure comprises 602 residues: Probable translation initiation factor IF-2 (602 aa).

The tr-type G domain occupies 9–229 (LRQPIVVVLG…GLTQNYMKNK (221 aa)). The G1 stretch occupies residues 18–25 (GHVDHGKT). 18–25 (GHVDHGKT) is a binding site for GTP. Positions 43-47 (EMTQE) are G2. A G3 region spans residues 82–85 (DTPG). Residues 82–86 (DTPGH) and 136–139 (NKID) each bind GTP. The G4 stretch occupies residues 136-139 (NKID). The tract at residues 204–206 (SAK) is G5.

Belongs to the TRAFAC class translation factor GTPase superfamily. Classic translation factor GTPase family. IF-2 subfamily.

Function in general translation initiation by promoting the binding of the formylmethionine-tRNA to ribosomes. Seems to function along with eIF-2. In Sulfolobus acidocaldarius (strain ATCC 33909 / DSM 639 / JCM 8929 / NBRC 15157 / NCIMB 11770), this protein is Probable translation initiation factor IF-2 (infB).